The chain runs to 465 residues: Ribosomal oxygenase 2 (465 aa).

One can recognise a JmjC domain in the interval 139 to 271 (QPQRYKDELW…NSWGDCLLDS (133 aa)). The Fe cation site is built by His-179, Asp-181, and His-240. Ser-309 bears the Phosphoserine mark.

It belongs to the ROX family. MINA53 subfamily. It depends on Fe(2+) as a cofactor. Predominantly expressed in testis. Expressed at high levels in spleen, thymus, and colon, but barely detectable in brain, skeletal muscle, and seminal vesicle (at protein level).

The protein localises to the nucleus. Its subcellular location is the nucleolus. It carries out the reaction L-histidyl-[ribosomal protein uL15] + 2-oxoglutarate + O2 = (3S)-3-hydroxy-L-histidyl-[ribosomal protein uL15] + succinate + CO2. It catalyses the reaction L-histidyl-[protein] + 2-oxoglutarate + O2 = (3S)-3-hydroxy-L-histidyl-[protein] + succinate + CO2. Oxygenase that can act as both a histone lysine demethylase and a ribosomal histidine hydroxylase. Is involved in the demethylation of trimethylated 'Lys-9' on histone H3 (H3K9me3), leading to an increase in ribosomal RNA expression. Also catalyzes the hydroxylation of 60S ribosomal protein L27a on 'His-39'. May play an important role in cell growth and survival. May be involved in ribosome biogenesis, most likely during the assembly process of pre-ribosomal particles. This is Ribosomal oxygenase 2 from Mus musculus (Mouse).